The chain runs to 541 residues: Protopine 6-monooxygenase (541 aa).

Residues 9–29 (LLLNTWISAYSMAALLALVLV) traverse the membrane as a helical segment. C476 contacts heme.

It belongs to the cytochrome P450 family. It depends on heme as a cofactor.

Its subcellular location is the endoplasmic reticulum membrane. It carries out the reaction protopine + reduced [NADPH--hemoprotein reductase] + O2 = 6-hydroxyprotopine + oxidized [NADPH--hemoprotein reductase] + H2O + H(+). Its pathway is alkaloid biosynthesis. Functionally, catalyzes the conversion of protopine and allocryptopine to dihydrosanguinarine and dihydrochelerythrine, respectively, in the biosynthesis of isoquinoline alkaloid sanguinarine. The polypeptide is Protopine 6-monooxygenase (CYP82N3) (Papaver somniferum (Opium poppy)).